Reading from the N-terminus, the 71-residue chain is Augerpeptide-s7a (71 aa).

Positions 1–20 (MSALKFVLICGLVLLLIETI) are cleaved as a signal peptide. Positions 21–29 (PGVSLNLMR) are excised as a propeptide. Intrachain disulfides connect Cys36–Cys48, Cys42–Cys65, and Cys47–Cys68.

Expressed by the venom duct.

The protein resides in the secreted. Its function is as follows. Elicits an uncoordinated twisting syndrome when injected into C.elegans, but has no effect on mice. The polypeptide is Augerpeptide-s7a (Terebra subulata (Chocolate spotted auger)).